Consider the following 105-residue polypeptide: MSKIHVRKKDTVVVISGKDKGKIGEVLSVLPKKGKVIVKDVNVVTKHQKPNRENMQGGIIHKEAPIFSSKVMLYCDKCKSATRISNKILEDGTKVRICKKCGETF.

The protein belongs to the universal ribosomal protein uL24 family. Part of the 50S ribosomal subunit.

One of two assembly initiator proteins, it binds directly to the 5'-end of the 23S rRNA, where it nucleates assembly of the 50S subunit. In terms of biological role, one of the proteins that surrounds the polypeptide exit tunnel on the outside of the subunit. The protein is Large ribosomal subunit protein uL24 of Clostridium botulinum (strain 657 / Type Ba4).